A 101-amino-acid chain; its full sequence is Small ribosomal subunit protein uS14 (101 aa).

The protein belongs to the universal ribosomal protein uS14 family. Part of the 30S ribosomal subunit. Contacts proteins S3 and S10.

Binds 16S rRNA, required for the assembly of 30S particles and may also be responsible for determining the conformation of the 16S rRNA at the A site. The protein is Small ribosomal subunit protein uS14 of Citrobacter koseri (strain ATCC BAA-895 / CDC 4225-83 / SGSC4696).